Consider the following 61-residue polypeptide: Small ribosomal subunit protein uS14 (61 aa).

Zn(2+) is bound by residues cysteine 24, cysteine 27, cysteine 40, and cysteine 43.

This sequence belongs to the universal ribosomal protein uS14 family. Zinc-binding uS14 subfamily. Part of the 30S ribosomal subunit. Contacts proteins S3 and S10. It depends on Zn(2+) as a cofactor.

Functionally, binds 16S rRNA, required for the assembly of 30S particles and may also be responsible for determining the conformation of the 16S rRNA at the A site. This Borrelia garinii subsp. bavariensis (strain ATCC BAA-2496 / DSM 23469 / PBi) (Borreliella bavariensis) protein is Small ribosomal subunit protein uS14.